Here is a 341-residue protein sequence, read N- to C-terminus: L-threonine 3-dehydrogenase (341 aa).

Cys38 is a Zn(2+) binding site. Active-site charge relay system residues include Thr40 and His43. Residues His63, Glu64, Cys93, Cys96, Cys99, and Cys107 each contribute to the Zn(2+) site. NAD(+) is bound by residues Ile175, Asp195, Arg200, 262–264 (LGI), and 286–287 (IY).

It belongs to the zinc-containing alcohol dehydrogenase family. As to quaternary structure, homotetramer. It depends on Zn(2+) as a cofactor.

It is found in the cytoplasm. It carries out the reaction L-threonine + NAD(+) = (2S)-2-amino-3-oxobutanoate + NADH + H(+). It participates in amino-acid degradation; L-threonine degradation via oxydo-reductase pathway; glycine from L-threonine: step 1/2. Functionally, catalyzes the NAD(+)-dependent oxidation of L-threonine to 2-amino-3-ketobutyrate. The sequence is that of L-threonine 3-dehydrogenase from Yersinia pestis bv. Antiqua (strain Antiqua).